Here is a 204-residue protein sequence, read N- to C-terminus: Imidazoleglycerol-phosphate dehydratase (204 aa).

Residues 183–204 (DPRMDGITPSTKGTLSESGDSQ) form a disordered region. Residues 190 to 204 (TPSTKGTLSESGDSQ) are compositionally biased toward polar residues.

The protein belongs to the imidazoleglycerol-phosphate dehydratase family.

It localises to the cytoplasm. The catalysed reaction is D-erythro-1-(imidazol-4-yl)glycerol 3-phosphate = 3-(imidazol-4-yl)-2-oxopropyl phosphate + H2O. The protein operates within amino-acid biosynthesis; L-histidine biosynthesis; L-histidine from 5-phospho-alpha-D-ribose 1-diphosphate: step 6/9. This is Imidazoleglycerol-phosphate dehydratase from Alcanivorax borkumensis (strain ATCC 700651 / DSM 11573 / NCIMB 13689 / SK2).